Reading from the N-terminus, the 191-residue chain is NAD(P)H-quinone oxidoreductase subunit 6, chloroplastic (191 aa).

5 helical membrane passes run 10-30, 32-52, 61-81, 89-109, and 153-173; these read TIFL…ILLT, IVYS…LYLL, AQIL…VMLI, FFVY…SIFL, and FLLP…GAIT.

It belongs to the complex I subunit 6 family. As to quaternary structure, NDH is composed of at least 16 different subunits, 5 of which are encoded in the nucleus.

The protein resides in the plastid. It is found in the chloroplast thylakoid membrane. It catalyses the reaction a plastoquinone + NADH + (n+1) H(+)(in) = a plastoquinol + NAD(+) + n H(+)(out). It carries out the reaction a plastoquinone + NADPH + (n+1) H(+)(in) = a plastoquinol + NADP(+) + n H(+)(out). NDH shuttles electrons from NAD(P)H:plastoquinone, via FMN and iron-sulfur (Fe-S) centers, to quinones in the photosynthetic chain and possibly in a chloroplast respiratory chain. The immediate electron acceptor for the enzyme in this species is believed to be plastoquinone. Couples the redox reaction to proton translocation, and thus conserves the redox energy in a proton gradient. This Marchantia polymorpha (Common liverwort) protein is NAD(P)H-quinone oxidoreductase subunit 6, chloroplastic (ndhG).